We begin with the raw amino-acid sequence, 309 residues long: Protein-L-isoaspartate O-methyltransferase 2 (309 aa).

The Nuclear localization signal signature appears at 23–28 (KKRKKK). Serine 144 is a catalytic residue.

Belongs to the methyltransferase superfamily. L-isoaspartyl/D-aspartyl protein methyltransferase family. In terms of tissue distribution, expressed in rosette leaves, stems, cauline leaves, flowers and developing seeds.

It is found in the nucleus. The enzyme catalyses [protein]-L-isoaspartate + S-adenosyl-L-methionine = [protein]-L-isoaspartate alpha-methyl ester + S-adenosyl-L-homocysteine. Its function is as follows. Catalyzes the methyl esterification of L-isoaspartyl residues in peptides and proteins that result from spontaneous decomposition of normal L-aspartyl and L-asparaginyl residues. It plays a role in the repair and/or degradation of damaged proteins. The chain is Protein-L-isoaspartate O-methyltransferase 2 (PIMT2) from Arabidopsis thaliana (Mouse-ear cress).